We begin with the raw amino-acid sequence, 305 residues long: Nod factor export ATP-binding protein I (305 aa).

Positions 8–237 constitute an ABC transporter domain; that stretch reads IDLVGVRKSF…HIGCNVIEIY (230 aa). An ATP-binding site is contributed by 40–47; it reads GPNGAGKS.

This sequence belongs to the ABC transporter superfamily. Lipooligosaccharide exporter (TC 3.A.1.102) family. In terms of assembly, the complex is composed of two ATP-binding proteins (NodI) and two transmembrane proteins (NodJ).

It is found in the cell inner membrane. In terms of biological role, part of the ABC transporter complex NodIJ involved in the export of the nodulation factors (Nod factors), the bacterial signal molecules that induce symbiosis and subsequent nodulation induction. Nod factors are LCO (lipo-chitin oligosaccharide), a modified beta-1,4-linked N-acetylglucosamine oligosaccharide. This subunit is responsible for energy coupling to the transport system. The protein is Nod factor export ATP-binding protein I of Bradyrhizobium sp. (strain SNU001).